The chain runs to 277 residues: NADPH-dependent 7-cyano-7-deazaguanine reductase (277 aa).

86–88 (IES) contacts substrate. 88 to 89 (SK) lines the NADPH pocket. Catalysis depends on Cys185, which acts as the Thioimide intermediate. The active-site Proton donor is the Asp192. Substrate is bound at residue 224-225 (HE). 253–254 (RG) serves as a coordination point for NADPH.

Belongs to the GTP cyclohydrolase I family. QueF type 2 subfamily. In terms of assembly, homodimer.

The protein resides in the cytoplasm. It carries out the reaction 7-aminomethyl-7-carbaguanine + 2 NADP(+) = 7-cyano-7-deazaguanine + 2 NADPH + 3 H(+). The protein operates within tRNA modification; tRNA-queuosine biosynthesis. Its function is as follows. Catalyzes the NADPH-dependent reduction of 7-cyano-7-deazaguanine (preQ0) to 7-aminomethyl-7-deazaguanine (preQ1). The sequence is that of NADPH-dependent 7-cyano-7-deazaguanine reductase from Hydrogenovibrio crunogenus (strain DSM 25203 / XCL-2) (Thiomicrospira crunogena).